Here is a 104-residue protein sequence, read N- to C-terminus: L-rhamnose mutarotase (104 aa).

Residue Tyr18 participates in substrate binding. Catalysis depends on His22, which acts as the Proton donor. Substrate-binding positions include Tyr41 and 76-77; that span reads WW.

This sequence belongs to the rhamnose mutarotase family. As to quaternary structure, homodimer.

It is found in the cytoplasm. It carries out the reaction alpha-L-rhamnose = beta-L-rhamnose. Its pathway is carbohydrate metabolism; L-rhamnose metabolism. Its function is as follows. Involved in the anomeric conversion of L-rhamnose. The sequence is that of L-rhamnose mutarotase from Yersinia pseudotuberculosis serotype O:1b (strain IP 31758).